Here is a 512-residue protein sequence, read N- to C-terminus: Putative B3 domain-containing protein REM4 (512 aa).

The TF-B3 1 DNA-binding region spans 11–103 (NKAFFIIDLS…VFHVSPFGRS (93 aa)). A disordered region spans residues 111 to 145 (SSSTSDDDDDERTVFDDDEDDDVGDDDDNSISEDD). Residues 115–145 (SDDDDDERTVFDDDEDDDVGDDDDNSISEDD) are compositionally biased toward acidic residues. 2 DNA-binding regions (TF-B3) span residues 169–265 (YLVA…LCPN) and 307–403 (ILTF…CSKV). The interval 408–465 (SSDGHKTADRKPRMTDQAPLAEEQTDNRVEKRAQVTEEGGPSRSTRADPGNLQQKQPC) is disordered. 2 stretches are compositionally biased toward basic and acidic residues: residues 410-421 (DGHKTADRKPRM) and 432-442 (TDNRVEKRAQV).

Its subcellular location is the nucleus. This is Putative B3 domain-containing protein REM4 (REM4) from Arabidopsis thaliana (Mouse-ear cress).